Consider the following 528-residue polypeptide: Nucleoporin ASM4 (528 aa).

The stretch at 2-3 (FG) is one FG 1 repeat. Over residues 23-50 (TTQMFQSQSQLQPQPQPQPQQQQQHLQF) the composition is skewed to low complexity. Disordered regions lie at residues 23–64 (TTQM…FGNS) and 88–144 (IKNG…SMNA). Polar residues-rich tracts occupy residues 51-64 (NGSS…FGNS) and 97-108 (QHGQGNNPSWVN). One copy of the FG 2 repeat lies at 61 to 62 (FG). The segment covering 110-125 (PKKRFTPHTVIRRKTT) has biased composition (basic residues). Low complexity predominate over residues 127-141 (QNSSSDINQNDDSSS). FG repeat units follow at residues 195–196 (FG), 274–275 (FG), and 291–292 (FG). The RRM Nup35-type domain occupies 265–394 (SSSLSAIIVF…IPYSKNAVEQ (130 aa)). Phosphoserine is present on residues serine 458 and serine 464. Residues 490-510 (NLLRNLESKMRQQEAKYRNNE) are a coiled coil. One copy of the FG 6 repeat lies at 523-524 (FG).

As to quaternary structure, component of the nuclear pore complex (NPC). NPC constitutes the exclusive means of nucleocytoplasmic transport. NPCs allow the passive diffusion of ions and small molecules and the active, nuclear transport receptor-mediated bidirectional transport of macromolecules such as proteins, RNAs, ribonucleoparticles (RNPs), and ribosomal subunits across the nuclear envelope. Due to its 8-fold rotational symmetry, all subunits are present with 8 copies or multiples thereof. ASM4 may form a subcomplex with NUP53, NDC1, and NUP170. Phosphorylated by CDC28.

It localises to the nucleus. Its subcellular location is the nuclear pore complex. The protein localises to the nucleus membrane. In terms of biological role, functions as a component of the nuclear pore complex (NPC). NPC components, collectively referred to as nucleoporins (NUPs), can play the role of both NPC structural components and of docking or interaction partners for transiently associated nuclear transport factors. Active directional transport is assured by both, a Phe-Gly (FG) repeat affinity gradient for these transport factors across the NPC and a transport cofactor concentration gradient across the nuclear envelope (GSP1 and GSP2 GTPases associated predominantly with GTP in the nucleus, with GDP in the cytoplasm). May have a mitosis control function. The chain is Nucleoporin ASM4 (ASM4) from Saccharomyces cerevisiae (strain ATCC 204508 / S288c) (Baker's yeast).